Reading from the N-terminus, the 129-residue chain is M-zodatoxin-Lt8a (129 aa).

The N-terminal stretch at 1-20 is a signal peptide; sequence MKYFVVALALVAAFACIAES. Residues 21-60 constitute a propeptide that is removed on maturation; it reads KPAESEHELAEVEEENELADLEDAVWLEHLADLSDLEEAR. A Processing quadruplet motif motif is present at residues 57–60; it reads EEAR.

This sequence belongs to the cationic peptide 06 (cytoinsectotoxin) family. Post-translationally, cleavage of the propeptide depends on the processing quadruplet motif (XXXR, with at least one of X being E). In terms of tissue distribution, expressed by the venom gland.

It is found in the secreted. Its function is as follows. Insecticidal, cytolytic and antimicrobial peptide. Has insecticidal activity against the flesh fly S.carnaria, and against the cockroach N.cinerea. Has insecticidal activity against D.melanogaster. Has hemolytic activity against human erythrocytes (EC(50)=6 uM). Has cytolytic activity against insect Sf9 cells (EC(50)=1 uM) and human leukocytes (EC(50)=3 uM). Has antibacterial activity against the Gram-positive bacteria A.globiformis VKM Ac-1112 (MIC=0.5 uM), and B.subtilis VKM B-501 (MIC=0.6-0.9 uM), and against the Gram-negative bacteria E.coli C600 (MIC=0.5 uM), E.coli DH5alpha (MIC=0.9 uM), E.coli MH1 (MIC=0.5 uM), P.aeruginosa PAO1 (MIC=1.9 uM), and P.fluorescens VKM B-894 (MIC=3.8 uM). Lacks antimicrobial activity against the Gram-positive bacteria M.luteus and S.aureus, and against the Gram-negative bacterium S.marcescens. Forms voltage-dependent, ion-permeable channels in membranes. At high concentration causes cell membrane lysis. The protein is M-zodatoxin-Lt8a (cit 1-1) of Lachesana tarabaevi (Spider).